A 217-amino-acid polypeptide reads, in one-letter code: PRA1 family protein B3 (217 aa).

Positions 1-24 (MMANPPTLPISDHSGGGSQSQQPV) are disordered. 5 helical membrane-spanning segments follow: residues 76–96 (LPYF…LSLL), 98–118 (HPFS…LYLF), 138–158 (LGVL…GSLL), 162–182 (LMIG…EDLF), and 193–213 (LLSF…STPA).

It belongs to the PRA1 family. In terms of assembly, interacts with PRA1B1, PRA1B2, PRA1B4, PRA1B5, PRA1B6 and PRA1E. As to expression, expressed in hypocotyls and shoot apex.

It localises to the endosome membrane. Functionally, may be involved in both secretory and endocytic intracellular trafficking in the endosomal/prevacuolar compartments. The sequence is that of PRA1 family protein B3 (PRA1B3) from Arabidopsis thaliana (Mouse-ear cress).